A 211-amino-acid chain; its full sequence is HTH-type transcriptional repressor FabR (211 aa).

The region spanning 10–70 is the HTH tetR-type domain; that stretch reads RTRRSLIEAA…TMVDESGLML (61 aa). The H-T-H motif DNA-binding region spans 33 to 52; the sequence is SLREVSREAGIAPTSFYRHF.

Homodimer.

It localises to the cytoplasm. Functionally, represses the transcription of fabB, involved in unsaturated fatty acid (UFA) biosynthesis. By controlling UFA production, FabR directly influences the physical properties of the membrane bilayer. This Yersinia pseudotuberculosis serotype O:1b (strain IP 31758) protein is HTH-type transcriptional repressor FabR.